Reading from the N-terminus, the 216-residue chain is GTP cyclohydrolase 1 (216 aa).

A disordered region spans residues 1-33 (MPQARGEGATPPTSLPNPSLKGVPLPDNPNNLE). Residues 24–33 (PLPDNPNNLE) show a composition bias toward low complexity. Cys-102, His-105, and Cys-173 together coordinate Zn(2+).

It belongs to the GTP cyclohydrolase I family. As to quaternary structure, toroid-shaped homodecamer, composed of two pentamers of five dimers.

It carries out the reaction GTP + H2O = 7,8-dihydroneopterin 3'-triphosphate + formate + H(+). It participates in cofactor biosynthesis; 7,8-dihydroneopterin triphosphate biosynthesis; 7,8-dihydroneopterin triphosphate from GTP: step 1/1. In Deinococcus radiodurans (strain ATCC 13939 / DSM 20539 / JCM 16871 / CCUG 27074 / LMG 4051 / NBRC 15346 / NCIMB 9279 / VKM B-1422 / R1), this protein is GTP cyclohydrolase 1 (folE).